Reading from the N-terminus, the 217-residue chain is MOB kinase activator 3A (217 aa).

Zn(2+) is bound by residues C83, C88, H165, and H170.

Belongs to the MOB1/phocein family.

May regulate the activity of kinases. The polypeptide is MOB kinase activator 3A (MOB3A) (Pongo abelii (Sumatran orangutan)).